Reading from the N-terminus, the 137-residue chain is Large ribosomal subunit protein uL16 (137 aa).

This sequence belongs to the universal ribosomal protein uL16 family. Part of the 50S ribosomal subunit.

Functionally, binds 23S rRNA and is also seen to make contacts with the A and possibly P site tRNAs. The sequence is that of Large ribosomal subunit protein uL16 from Francisella tularensis subsp. holarctica (strain FTNF002-00 / FTA).